The sequence spans 362 residues: tRNA-specific 2-thiouridylase MnmA (362 aa).

ATP-binding positions include 9–16 (GMSGGVDS) and methionine 35. The interaction with target base in tRNA stretch occupies residues 95–97 (NPD). Cysteine 100 (nucleophile) is an active-site residue. Cysteines 100 and 196 form a disulfide. Glycine 124 is a binding site for ATP. Residues 146–148 (KDQ) form an interaction with tRNA region. The active-site Cysteine persulfide intermediate is cysteine 196. The tract at residues 308–309 (RY) is interaction with tRNA.

This sequence belongs to the MnmA/TRMU family.

It localises to the cytoplasm. The catalysed reaction is S-sulfanyl-L-cysteinyl-[protein] + uridine(34) in tRNA + AH2 + ATP = 2-thiouridine(34) in tRNA + L-cysteinyl-[protein] + A + AMP + diphosphate + H(+). Its function is as follows. Catalyzes the 2-thiolation of uridine at the wobble position (U34) of tRNA, leading to the formation of s(2)U34. The sequence is that of tRNA-specific 2-thiouridylase MnmA from Nitrosomonas europaea (strain ATCC 19718 / CIP 103999 / KCTC 2705 / NBRC 14298).